An 882-amino-acid chain; its full sequence is Alanine--tRNA ligase (882 aa).

Residues His568, His572, Cys670, and His674 each contribute to the Zn(2+) site.

This sequence belongs to the class-II aminoacyl-tRNA synthetase family. Zn(2+) is required as a cofactor.

The protein localises to the cytoplasm. It catalyses the reaction tRNA(Ala) + L-alanine + ATP = L-alanyl-tRNA(Ala) + AMP + diphosphate. In terms of biological role, catalyzes the attachment of alanine to tRNA(Ala) in a two-step reaction: alanine is first activated by ATP to form Ala-AMP and then transferred to the acceptor end of tRNA(Ala). Also edits incorrectly charged Ser-tRNA(Ala) and Gly-tRNA(Ala) via its editing domain. The sequence is that of Alanine--tRNA ligase from Lactobacillus gasseri (strain ATCC 33323 / DSM 20243 / BCRC 14619 / CIP 102991 / JCM 1131 / KCTC 3163 / NCIMB 11718 / NCTC 13722 / AM63).